Here is a 258-residue protein sequence, read N- to C-terminus: Hydroxyacylglutathione hydrolase (258 aa).

Residues H56, H58, D60, H61, H112, D132, and H170 each coordinate Zn(2+).

This sequence belongs to the metallo-beta-lactamase superfamily. Glyoxalase II family. Monomer. It depends on Zn(2+) as a cofactor.

It carries out the reaction an S-(2-hydroxyacyl)glutathione + H2O = a 2-hydroxy carboxylate + glutathione + H(+). It functions in the pathway secondary metabolite metabolism; methylglyoxal degradation; (R)-lactate from methylglyoxal: step 2/2. In terms of biological role, thiolesterase that catalyzes the hydrolysis of S-D-lactoyl-glutathione to form glutathione and D-lactic acid. The chain is Hydroxyacylglutathione hydrolase from Pseudomonas aeruginosa (strain ATCC 15692 / DSM 22644 / CIP 104116 / JCM 14847 / LMG 12228 / 1C / PRS 101 / PAO1).